Consider the following 286-residue polypeptide: Bifunctional protein FolD (286 aa).

NADP(+) contacts are provided by residues 166-168 (GAS) and Ile-232.

The protein belongs to the tetrahydrofolate dehydrogenase/cyclohydrolase family. As to quaternary structure, homodimer.

It catalyses the reaction (6R)-5,10-methylene-5,6,7,8-tetrahydrofolate + NADP(+) = (6R)-5,10-methenyltetrahydrofolate + NADPH. The enzyme catalyses (6R)-5,10-methenyltetrahydrofolate + H2O = (6R)-10-formyltetrahydrofolate + H(+). Its pathway is one-carbon metabolism; tetrahydrofolate interconversion. Catalyzes the oxidation of 5,10-methylenetetrahydrofolate to 5,10-methenyltetrahydrofolate and then the hydrolysis of 5,10-methenyltetrahydrofolate to 10-formyltetrahydrofolate. This is Bifunctional protein FolD from Vibrio campbellii (strain ATCC BAA-1116).